The chain runs to 291 residues: ATP synthase gamma chain (291 aa).

The protein belongs to the ATPase gamma chain family. As to quaternary structure, F-type ATPases have 2 components, CF(1) - the catalytic core - and CF(0) - the membrane proton channel. CF(1) has five subunits: alpha(3), beta(3), gamma(1), delta(1), epsilon(1). CF(0) has three main subunits: a, b and c.

The protein resides in the cell membrane. Its function is as follows. Produces ATP from ADP in the presence of a proton gradient across the membrane. The gamma chain is believed to be important in regulating ATPase activity and the flow of protons through the CF(0) complex. This is ATP synthase gamma chain from Streptococcus equi subsp. equi (strain 4047).